We begin with the raw amino-acid sequence, 64 residues long: Small, acid-soluble spore protein beta (64 aa).

Belongs to the alpha/beta-type SASP family.

In terms of biological role, SASP are bound to spore DNA. They are double-stranded DNA-binding proteins that cause DNA to change to an a-like conformation. They protect the DNA backbone from chemical and enzymatic cleavage and are thus involved in dormant spore's high resistance to UV light. In Paraclostridium bifermentans (Clostridium bifermentans), this protein is Small, acid-soluble spore protein beta.